We begin with the raw amino-acid sequence, 148 residues long: HTH-type transcriptional regulator Ptr1 (148 aa).

The region spanning 2–63 is the HTH asnC-type domain; it reads LDRIDLKILR…SINPKNLGFE (62 aa). The H-T-H motif DNA-binding region spans 21-40; it reads FREIGRELGISEGTVRNRVK.

Homodimer.

In terms of biological role, participates in positive as well as negative regulation of transcription. Binds to its own promoter. In Methanocaldococcus jannaschii (strain ATCC 43067 / DSM 2661 / JAL-1 / JCM 10045 / NBRC 100440) (Methanococcus jannaschii), this protein is HTH-type transcriptional regulator Ptr1 (ptr1).